The following is a 208-amino-acid chain: FMN-dependent NADH:quinone oxidoreductase 2 (208 aa).

Residue 17-19 (SVS) participates in FMN binding.

Belongs to the azoreductase type 1 family. As to quaternary structure, homodimer. It depends on FMN as a cofactor.

It carries out the reaction 2 a quinone + NADH + H(+) = 2 a 1,4-benzosemiquinone + NAD(+). It catalyses the reaction N,N-dimethyl-1,4-phenylenediamine + anthranilate + 2 NAD(+) = 2-(4-dimethylaminophenyl)diazenylbenzoate + 2 NADH + 2 H(+). Quinone reductase that provides resistance to thiol-specific stress caused by electrophilic quinones. Functionally, also exhibits azoreductase activity. Catalyzes the reductive cleavage of the azo bond in aromatic azo compounds to the corresponding amines. In Halalkalibacterium halodurans (strain ATCC BAA-125 / DSM 18197 / FERM 7344 / JCM 9153 / C-125) (Bacillus halodurans), this protein is FMN-dependent NADH:quinone oxidoreductase 2.